A 417-amino-acid polypeptide reads, in one-letter code: S-inosyl-L-homocysteine hydrolase (417 aa).

Residues D124 and E149 each contribute to the substrate site. Position 150 to 152 (150 to 152 (TTT)) interacts with NAD(+). 2 residues coordinate substrate: K179 and D183. Residues N184, 213–218 (GYGWCG), E236, N271, 292–294 (SGH), and N339 each bind NAD(+).

The protein belongs to the adenosylhomocysteinase family. It depends on NAD(+) as a cofactor.

The protein resides in the cytoplasm. The catalysed reaction is S-inosyl-L-homocysteine + H2O = L-homocysteine + inosine. Its pathway is amino-acid biosynthesis; S-adenosyl-L-methionine biosynthesis. Catalyzes the hydrolysis of S-inosyl-L-homocysteine (SIH) to L-homocysteine (Hcy) and inosine. Likely functions in a S-adenosyl-L-methionine (SAM) recycling pathway from S-adenosyl-L-homocysteine (SAH) produced from SAM-dependent methylation reactions. Can also catalyze the reverse reaction in vitro, i.e. the synthesis of SIH from Hcy and inosine. In Methanothermobacter thermautotrophicus (strain ATCC 29096 / DSM 1053 / JCM 10044 / NBRC 100330 / Delta H) (Methanobacterium thermoautotrophicum), this protein is S-inosyl-L-homocysteine hydrolase.